A 75-amino-acid chain; its full sequence is Small ribosomal subunit protein eS17 (75 aa).

This sequence belongs to the eukaryotic ribosomal protein eS17 family.

The chain is Small ribosomal subunit protein eS17 from Thermoplasma volcanium (strain ATCC 51530 / DSM 4299 / JCM 9571 / NBRC 15438 / GSS1).